A 399-amino-acid polypeptide reads, in one-letter code: Elongation factor Tu (399 aa).

Positions K10–T209 constitute a tr-type G domain. Positions G19–T26 are G1. G19–T26 lines the GTP pocket. T26 provides a ligand contact to Mg(2+). The G2 stretch occupies residues G60–A64. Residues D81–G84 are G3. GTP is bound by residues D81–H85 and N136–D139. The segment at N136–D139 is G4. Residues S174 to K176 form a G5 region.

The protein belongs to the TRAFAC class translation factor GTPase superfamily. Classic translation factor GTPase family. EF-Tu/EF-1A subfamily. In terms of assembly, monomer.

The protein localises to the cytoplasm. It carries out the reaction GTP + H2O = GDP + phosphate + H(+). Functionally, GTP hydrolase that promotes the GTP-dependent binding of aminoacyl-tRNA to the A-site of ribosomes during protein biosynthesis. In Sulfurimonas denitrificans (strain ATCC 33889 / DSM 1251) (Thiomicrospira denitrificans (strain ATCC 33889 / DSM 1251)), this protein is Elongation factor Tu.